We begin with the raw amino-acid sequence, 382 residues long: Putative 12-oxophytodienoate reductase 3 (382 aa).

Residues 37–39 (PLT), Ala-70, and Gln-112 each bind FMN. Residues 120–138 (STNDQQPNGQAPISSTDKQ) are compositionally biased toward polar residues. The tract at residues 120–147 (STNDQQPNGQAPISSTDKQITPDDSHTV) is disordered. Position 184 to 187 (184 to 187 (HGAH)) interacts with substrate. Residue Tyr-189 is the Proton donor of the active site. FMN is bound at residue Arg-236. Arg-277 serves as a coordination point for substrate. FMN-binding positions include Gly-307 and 328 to 329 (GR).

This sequence belongs to the NADH:flavin oxidoreductase/NADH oxidase family. The cofactor is FMN.

Functionally, putative oxophytodienoate reductase that may be involved in the biosynthesis or metabolism of oxylipin signaling molecules. The polypeptide is Putative 12-oxophytodienoate reductase 3 (OPR3) (Oryza sativa subsp. japonica (Rice)).